The sequence spans 184 residues: GTP-binding protein Rheb (184 aa).

A Glycyl lysine isopeptide (Lys-Gly) (interchain with G-Cter in ubiquitin) cross-link involves residue K8. Positions 16, 17, 18, 19, 20, 21, 32, and 33 each coordinate GDP. Residue S16 coordinates GTP. Residues G18, K19, S20, S21, and V32 each coordinate GTP. Residue S20 coordinates Mg(2+). The GTP site is built by Y35, T38, N119, and D122. Residues 35 to 43 (YDPTIENTF) carry the Effector region motif. T38 contributes to the Mg(2+) binding site. 2 residues coordinate GDP: N119 and D122. S130 bears the Phosphoserine; by MAPKAPK5 mark. Residue A150 participates in GDP binding. Position 150 (A150) interacts with GTP. C181 carries the post-translational modification Cysteine methyl ester. C181 carries S-farnesyl cysteine lipidation. The propeptide at 182–184 (SVM) is removed in mature form.

Belongs to the small GTPase superfamily. Rheb family. In terms of assembly, associates with the mTORC1 complex (MTOR, MLST8 and RPTOR) in a guanyl nucleotide-independent manner. Interacts with TSC2. Interacts with MCRS1; the interaction maintains RHEB at the lysosome in its active GTP-bound form and prevents its interaction with the mTORC1 complex inhibitor TSC2, ensuring activation of the mTORC1 complex by RHEB. Interacts (when prenylated) with PDE6D; this promotes release from membranes. In terms of processing, farnesylation is important for efficiently activating mTORC1-mediated signaling. Post-translationally, polyubiquitinated in response to amino acid, promoting its interaction with MTOR and mTORC1 activation. Deubiquitination by ATXN3 promotes recruitment of the TSC-TBC complex and RHEB inactivation by TSC2. Monoubiquitinated at Lys-8 by RNF152, promoting its association with the TSC-TBC complex. Deubiquitinated at Lys-8 by USP4, promoting mTORC1 activation. Phosphorylation by MAPKAPK5 impairs GTP-binding and inactivation. In terms of tissue distribution, ubiquitous. Highest levels observed in skeletal and cardiac muscle.

It is found in the endomembrane system. The protein localises to the lysosome membrane. The protein resides in the golgi apparatus membrane. Its subcellular location is the endoplasmic reticulum membrane. It localises to the cytoplasm. It is found in the cytosol. The catalysed reaction is GTP + H2O = GDP + phosphate + H(+). With respect to regulation, alternates between an inactive form bound to GDP and an active form bound to GTP. Inactivated by the TSC-TBC complex via the GTPase activating protein (GAP) domain of TSC2. Autoinhibited by Tyr-35, which constrains the active site conformation, restricting the access of the catalytic Asp-65 to the nucleotide-binding pocket. Specifically inhibited by NR1 (4-bromo-6-(3,4-dichlorophenylthio)-1-(4-(dimethylcarbamoyl)benzyl)-1H-indole-2-carboxylic acid). Small GTPase that acts as an allosteric activator of the canonical mTORC1 complex, an evolutionarily conserved central nutrient sensor that stimulates anabolic reactions and macromolecule biosynthesis to promote cellular biomass generation and growth. In response to nutrients, growth factors or amino acids, specifically activates the protein kinase activity of MTOR, the catalytic component of the mTORC1 complex: acts by causing a conformational change that allows the alignment of residues in the active site of MTOR, thereby enhancing the phosphorylation of ribosomal protein S6 kinase (RPS6KB1 and RPS6KB2) and EIF4EBP1 (4E-BP1). RHEB is also required for localization of the TSC-TBC complex to lysosomal membranes. In response to starvation, RHEB is inactivated by the TSC-TBC complex, preventing activation of mTORC1. Has low intrinsic GTPase activity. This is GTP-binding protein Rheb from Homo sapiens (Human).